Reading from the N-terminus, the 152-residue chain is Transcription elongation factor Spt5 (152 aa).

A KOW domain is found at 99 to 128; sequence PGDVVEVISGPFRGTQAQVIRVEEAKGEVV.

The protein belongs to the archaeal Spt5 family. Heterodimer composed of Spt4 and Spt5. Interacts with RNA polymerase (RNAP).

In terms of biological role, stimulates transcription elongation. This chain is Transcription elongation factor Spt5, found in Saccharolobus solfataricus (strain ATCC 35092 / DSM 1617 / JCM 11322 / P2) (Sulfolobus solfataricus).